The primary structure comprises 360 residues: Magnesium-protoporphyrin IX monomethyl ester [oxidative] cyclase (360 aa).

The tract at residues 1-21 (MPPTAVTEATAVPGSNVTTKD) is disordered.

Belongs to the AcsF family. Requires Fe cation as cofactor.

It catalyses the reaction Mg-protoporphyrin IX 13-monomethyl ester + 3 NADPH + 3 O2 + 2 H(+) = 3,8-divinyl protochlorophyllide a + 3 NADP(+) + 5 H2O. It functions in the pathway porphyrin-containing compound metabolism; chlorophyll biosynthesis (light-independent). Catalyzes the formation of the isocyclic ring in chlorophyll biosynthesis. Mediates the cyclase reaction, which results in the formation of divinylprotochlorophyllide (Pchlide) characteristic of all chlorophylls from magnesium-protoporphyrin IX 13-monomethyl ester (MgPMME). This chain is Magnesium-protoporphyrin IX monomethyl ester [oxidative] cyclase, found in Synechococcus sp. (strain CC9311).